The primary structure comprises 1663 residues: Cortactin-binding protein 2 (1663 aa).

5 disordered regions span residues 1 to 23 (MATD…AGAA), 203 to 222 (KKKT…RSTE), 367 to 440 (GASV…LHPG), 454 to 478 (GNAN…SPTS), and 498 to 614 (RFTS…LPPK). A coiled-coil region spans residues 119-276 (KKMQERMSAQ…EQLKKGSDSK (158 aa)). Residues 386-396 (PSTGSTSDPTS) show a composition bias toward low complexity. Asymmetric dimethylarginine is present on Arg498. Positions 583-593 (TVASTPSSLPQ) are enriched in polar residues. ANK repeat units follow at residues 709 to 739 (GRPT…DINY), 743 to 772 (DGHS…QVNA), 776 to 805 (NGFT…NINH), 809 to 838 (GGQT…NRSV), 842 to 871 (DGWT…PAHG), and 912 to 942 (EGWT…EPER). Residues 1448-1483 (KKGESGAWRKVNTSPRRKSGRFSLPTWNKPDLSTEG) are disordered. A Phosphoserine modification is found at Ser1524. The interval 1560–1663 (DSSGNNPVLS…KNGHLEKPNK (104 aa)) is disordered. Composition is skewed to polar residues over residues 1561–1574 (SSGN…TINN) and 1582–1599 (KEVS…SNSK). The span at 1624–1638 (SQNTKRSSSSSNTRQ) shows a compositional bias: low complexity. Over residues 1645 to 1663 (SKEENWNLHKNGHLEKPNK) the composition is skewed to basic and acidic residues.

Interacts with CTTN/cortactin SH3 domain. Interacts with STRN, STRN4/zinedin and MOB4/phocein; this interactions mediate the association with the STRIPAK core complex and may regulate dendritic spine distribution of the STRIPAK complex in hippocampal neurons. Activation of glutamate receptors weakens the interaction with STRN and STRN4.

It is found in the cytoplasm. It localises to the cell cortex. Its subcellular location is the cell projection. The protein localises to the dendritic spine. In terms of biological role, regulates the dendritic spine distribution of CTTN/cortactin in hippocampal neurons, and thus controls dendritic spinogenesis and dendritic spine maintenance. Associates with the striatin-interacting phosphatase and kinase (STRIPAK) core complex to regulate dendritic spine distribution of the STRIPAK complex in hippocampal neurons. The polypeptide is Cortactin-binding protein 2 (CTTNBP2) (Gorilla gorilla gorilla (Western lowland gorilla)).